Reading from the N-terminus, the 225-residue chain is Type II restriction enzyme BslI subunit alpha (225 aa).

2 C4-type zinc fingers span residues 36–53 and 63–84; these read CKDC…CYFC and CNSC…TDGC.

In terms of assembly, heterotetramer of two alpha and two beta subunits. The alpha subunit is believed to be responsible for DNA recognition, while the beta subunit is thought to mediate cleavage. Zn(2+) is required as a cofactor.

It carries out the reaction Endonucleolytic cleavage of DNA to give specific double-stranded fragments with terminal 5'-phosphates.. Functionally, a P subtype restriction enzyme that recognizes the double-stranded sequence 5'-CCN(7)GG-3' and cleaves after N-7. The polypeptide is Type II restriction enzyme BslI subunit alpha (Bacillus sp. (strain NEB-606)).